A 198-amino-acid polypeptide reads, in one-letter code: MRWPVPPLGYLLLGGQGLLLTFSLISSQNNTSPVTYPDINVSAAPEPRDPLGPLVLCSYLPEEFVECDDPVDHMGNGTAQQELRYGCKKFGGQAYGDVEHTQVMCRALDGIECDGSRSFLRGNRPCIKYTGHYFITTLLYSFFLGCFGVDRFCLGHTGTAVGKLLTWGGLGIWWFVDLILLITGGLMPSDNSNWCTIY.

Positions 1–27 (MRWPVPPLGYLLLGGQGLLLTFSLISS) are cleaved as a signal peptide. Residues 28 to 128 (QNNTSPVTYP…FLRGNRPCIK (101 aa)) lie on the Extracellular side of the membrane. 3 N-linked (GlcNAc...) asparagine glycosylation sites follow: Asn29, Asn40, and Asn76. Residues 129–149 (YTGHYFITTLLYSFFLGCFGV) form a helical membrane-spanning segment. One can recognise a TM2 domain in the interval 131–179 (GHYFITTLLYSFFLGCFGVDRFCLGHTGTAVGKLLTWGGLGIWWFVDLI). Residues 150 to 166 (DRFCLGHTGTAVGKLLT) lie on the Cytoplasmic side of the membrane. The helical transmembrane segment at 167–187 (WGGLGIWWFVDLILLITGGLM) threads the bilayer. Topologically, residues 188-198 (PSDNSNWCTIY) are extracellular.

The protein belongs to the TM2 family.

It is found in the membrane. The sequence is that of TM2 domain-containing protein 2 (tm2d2) from Xenopus laevis (African clawed frog).